The sequence spans 324 residues: Tyrosine--tRNA ligase (324 aa).

Position 36 (Tyr-36) interacts with L-tyrosine. The short motif at 41 to 49 (PSGKVHLGH) is the 'HIGH' region element. Positions 158, 162, 165, and 180 each coordinate L-tyrosine. A 'KMSKS' region motif is present at residues 215-219 (KMSSS). ATP is bound at residue Ser-218.

It belongs to the class-I aminoacyl-tRNA synthetase family. TyrS type 3 subfamily. Homodimer.

The protein resides in the cytoplasm. It carries out the reaction tRNA(Tyr) + L-tyrosine + ATP = L-tyrosyl-tRNA(Tyr) + AMP + diphosphate + H(+). In terms of biological role, catalyzes the attachment of tyrosine to tRNA(Tyr) in a two-step reaction: tyrosine is first activated by ATP to form Tyr-AMP and then transferred to the acceptor end of tRNA(Tyr). This is Tyrosine--tRNA ligase from Methanopyrus kandleri (strain AV19 / DSM 6324 / JCM 9639 / NBRC 100938).